A 1982-amino-acid polypeptide reads, in one-letter code: Ras guanine nucleotide exchange factor V (1982 aa).

LRR repeat units follow at residues 1–26 (MGNINSICLNNNGKYRIDSISCSLEG), 47–68 (LTQLLIIRECKLKQIPVNITNL), 69–94 (SNLSELILSDNKLSQLPWSLPPPFKP), 105–128 (NENLVRLDLSNNRFTEFPSSVFVL), 130–151 (NLKQLILCNNQLTNMNVTLCGG), 164–187 (ACQLEELKLSNNNFTIFPSIIGDQ), 188–210 (LTTLKSLDLSGNTITSLPNSFSN), 212–234 (VSLTSLNLKSNKFTCFPPSLCTL), 236–257 (KLVHLNLSCNQILVSPSDHTLG), 261–284 (LPSLEKLELQHNRFAHFPMDILEI), 286–307 (SLRVLKLQDNDIDKIPDKIGNL), 308–330 (LNLNELFLSENKITQLPSTIGEL), 331–352 (INLRKLYLEYNKIGSLPQEFSK), 354–376 (SKLNILILHNNDLKFVPDQLHSL), and 378–399 (QLLRLSLDENQLSSSDQKLIKS). The Extracellular portion of the chain corresponds to 1 to 1831 (MGNINSICLN…IANAFYELRN (1831 aa)). 3 disordered regions span residues 414–436 (YGSTMNGTGTTSSSGSASTSTHG), 457–532 (NQIN…NKKQ), and 615–654 (NNSGGGDSMNGSGGNINNSGGSGSGCGTISGSTTKQRRGS). 2 stretches are compositionally biased toward low complexity: residues 415-436 (GSTMNGTGTTSSSGSASTSTHG) and 457-495 (NQINNNNNNNNNNNNNNNNNNNSSNNNSGTNSLSSTPNG). The LRR 16 repeat unit spans residues 443-466 (DILLSSVTLNNSILNQINNNNNNN). The segment covering 506–520 (LTISRSLFRGNSSNL) has biased composition (polar residues). Residues 515 to 567 (GNSSNLESEKEDFINKKQQQQQQQQQQQQQQQQQQQQQQQQQQQQQQQQQQLG) adopt a coiled-coil conformation. An LRR 17 repeat occupies 592-615 (EDDIQKMQLGLEALSNLETSIGSN). The segment covering 616 to 642 (NSGGGDSMNGSGGNINNSGGSGSGCGT) has biased composition (gly residues). 2 LRR repeats span residues 657 to 684 (LPPTNAFKLSPNVVSSSYNTLPASVMSG) and 773 to 796 (HSNLSQSLSINNLAHRLPTSLSSS). 2 disordered regions span residues 756-778 (QSSTNSFLPPQHQHHHHHSNLSQ) and 807-829 (LQFQQQQQHHHHNHNNHQNSNQP). The GBD/FH3 domain maps to 832–1236 (TIVPSFSKFK…QIKYSIDRYG (405 aa)). LRR repeat units follow at residues 979-1003 (LLGILQFNLDNAQLQFDEEKVGYCL), 1075-1100 (SPYVPLVALLRNPIIEMPTKTTVFKI), 1239-1263 (VPAIGSLVLDGSILQSSGSQSRWVD), and 1689-1712 (VQNMPAQSIEDDGLKELTELFVDL). Residues 1595–1717 (KDRRVSSVTL…LFVDLSTKSY (123 aa)) form the N-terminal Ras-GEF domain. In terms of domain architecture, Ras-GEF spans 1747 to 1974 (DEIEIARQLS…YEMSLSAEPR (228 aa)). A helical membrane pass occupies residues 1832–1848 (YHLLMAIISGLNASPVL). At 1849-1982 (RLKYTKGKLS…PRNAERYDIQ (134 aa)) the chain is on the cytoplasmic side. 2 LRR repeats span residues 1865–1888 (LDTLEELMSTQSSMKNYRADLAAA) and 1917–1941 (RINFKKLEMYKKTIATLQNFSLFPY).

It localises to the membrane. Promotes the exchange of Ras-bound GDP by GTP. In Dictyostelium discoideum (Social amoeba), this protein is Ras guanine nucleotide exchange factor V (gefV).